The primary structure comprises 92 residues: AFELTQTPASVEAAVGGTVTINCQASESISNWLAWYQQKPGQPXKLLIYKASTLASGVSSRFKGSGSGTQFTLTISDLECADAATYYCQSTD.

Residues 1 to 23 (AFELTQTPASVEAAVGGTVTINC) are framework-1. Positions 24–34 (QASESISNWLA) are complementarity-determining-1. Positions 35–49 (WYQQKPGQPXKLLIY) are framework-2. Positions 50–56 (KASTLAS) are complementarity-determining-2. The tract at residues 57–88 (GVSSRFKGSGSGTQFTLTISDLECADAATYYC) is framework-3. The interval 89–92 (QSTD) is complementarity-determining-3.

In Oryctolagus cuniculus (Rabbit), this protein is Ig kappa chain V region 3381.